A 60-amino-acid chain; its full sequence is Large ribosomal subunit protein uL30 (60 aa).

Belongs to the universal ribosomal protein uL30 family. As to quaternary structure, part of the 50S ribosomal subunit.

The protein is Large ribosomal subunit protein uL30 of Xanthobacter autotrophicus (strain ATCC BAA-1158 / Py2).